The sequence spans 578 residues: Ribonuclease SLFN12 (578 aa).

Ser368 bears the Phosphoserine mark. Residues 551–560 (AENLYQIIGI) are mediates interaction with PDE3A. Residue Ser573 is modified to Phosphoserine.

It belongs to the Schlafen family. Subgroup II subfamily. In terms of assembly, homodimer. Interacts with PDE3A; direct low affinity interaction which is stimulated by binding of 17beta-estradiol/E2 to PDE3A and that positively regulates the ribonuclease activity of SLFN12. Interacts with SERPINB12; as part of a pathway regulating cell differentiation. Post-translationally, phosphorylation at Ser-368 and Ser-573 negatively regulates the ribonuclease activity. Dephosphorylation is induced by the interaction with PDE3A and stimulates the rRNA ribonuclease activity.

The protein localises to the nucleus. It localises to the cytoplasm. The protein resides in the cytosol. In terms of biological role, ribonuclease which is part of an E2/17beta-estradiol-induced pro-apoptotic signaling pathway. E2 stabilizes the PDE3A/SLFN12 complex in the cytosol, promoting the dephosphorylation of SLFN12 and activating its pro-apoptotic ribosomal RNA/rRNA ribonuclease activity. This apoptotic pathway might be relevant in tissues with high concentration of E2 and be for instance involved in placenta remodeling. May play a role in cell differentiation. In Homo sapiens (Human), this protein is Ribonuclease SLFN12.